Consider the following 479-residue polypeptide: MASHAVTSGQKPHVVCIPFPAQGHINPMLKVAKLLYARGFHVTFVNTNYNHNRLIRSRGPNSLDGLPSFRFESIPDGLPEENKDVMQDVPTLCESTMKNCLAPFKELLRRINTTKDVPPVSCIVSDGVMSFTLDAAEELGVPDVLFWTPSACGFLAYLHFYRFIEKGLSPIKDESSLDTKINWIPSMKNLGLKDIPSFIRATNTEDIMLNFFVHEADRAKRASAIILNTFDSLEHDVVRSIQSIIPQVYTIGPLHLFVNRDIDEESDIGQIGTNMWREEMECLDWLDTKSPNSVVYVNFGSITVMSAKQLVEFAWGLAATKKDFLWVIRPDLVAGDVPMLPPDFLIETANRRMLASWCPQEKVLSHPAVGGFLTHSGWNSTLESLSGGVPMVCWPFFAEQQTNCKYCCDEWEVGMEIGGDVRREEVEELVRELMDGDKGKKMRQKAEEWQRLAEEATKPIYGSSELNFQMVVDKVLLGE.

Residues Ser301, 358-360, 375-383, and 397-400 contribute to the UDP-alpha-D-glucose site; these read CPQ, HSGWNSTLE, and FAEQ.

It belongs to the UDP-glycosyltransferase family. As to expression, expressed in roots, shoots and leaves.

The chain is UDP-glycosyltransferase 85A5 (UGT85A5) from Arabidopsis thaliana (Mouse-ear cress).